The sequence spans 243 residues: tRNA pseudouridine synthase A (243 aa).

Residue Asp53 is the Nucleophile of the active site. Tyr111 is a binding site for substrate.

This sequence belongs to the tRNA pseudouridine synthase TruA family. Homodimer.

The enzyme catalyses uridine(38/39/40) in tRNA = pseudouridine(38/39/40) in tRNA. Functionally, formation of pseudouridine at positions 38, 39 and 40 in the anticodon stem and loop of transfer RNAs. The polypeptide is tRNA pseudouridine synthase A (Chlorobium limicola (strain DSM 245 / NBRC 103803 / 6330)).